The following is a 73-amino-acid chain: Salivary thrombin inhibitor XC-42 (73 aa).

An N-terminal signal peptide occupies residues 1-23 (MKLQFLFIFIAFCVMLFAQIATA).

Interacts with human F2 (thrombin). In terms of tissue distribution, salivary gland (at protein level).

It localises to the secreted. In terms of biological role, acts as a competitive inhibitor of host thrombin. This chain is Salivary thrombin inhibitor XC-42, found in Xenopsylla cheopis (Oriental rat flea).